The primary structure comprises 212 residues: Ropporin-1A (212 aa).

One can recognise an RIIa domain in the interval Pro12–Thr49. Ser56 bears the Phosphoserine mark. Residues Val209 to Glu212 are interaction with RHPN1.

This sequence belongs to the ropporin family. In terms of assembly, homodimer. Interacts with AKAP3 and RHPN1. May interact with SPA17. Interacts with FSCB; the interaction increases upon spermatozoa capacitation conditions. Interacts with CFAP61. In terms of processing, sumoylated, sumoylation decreases upon spermatozoa capacitation conditions. As to expression, testis specific in adult. Overexpressed in hematologic tumor cells.

It localises to the cell projection. It is found in the cilium. The protein localises to the flagellum. In terms of biological role, important for male fertility. With ROPN1L, involved in fibrous sheath integrity and sperm motility, plays a role in PKA-dependent signaling processes required for spermatozoa capacitation. This is Ropporin-1A (ROPN1) from Homo sapiens (Human).